The chain runs to 330 residues: Malate dehydrogenase (330 aa).

Gly-11–Ala-17 provides a ligand contact to NAD(+). Substrate contacts are provided by Arg-92 and Arg-98. Residues Asn-105, Gln-112, and Val-129 to Asn-131 contribute to the NAD(+) site. The substrate site is built by Asn-131 and Arg-162. His-187 functions as the Proton acceptor in the catalytic mechanism.

It belongs to the LDH/MDH superfamily. MDH type 2 family.

It catalyses the reaction (S)-malate + NAD(+) = oxaloacetate + NADH + H(+). Functionally, catalyzes the reversible oxidation of malate to oxaloacetate. The chain is Malate dehydrogenase from Protochlamydia amoebophila (strain UWE25).